We begin with the raw amino-acid sequence, 190 residues long: Large ribosomal subunit protein bL17 (190 aa).

Positions 135–165 (AKAAPAAEEAPAEEAPAAEEAATEEAPAAEE) are enriched in low complexity. The segment at 135–190 (AKAAPAAEEAPAEEAPAAEEAATEEAPAAEETATEEAAAEEAPAAEEAPAEEKDAK) is disordered.

This sequence belongs to the bacterial ribosomal protein bL17 family. Part of the 50S ribosomal subunit. Contacts protein L32.

The sequence is that of Large ribosomal subunit protein bL17 from Pseudarthrobacter chlorophenolicus (strain ATCC 700700 / DSM 12829 / CIP 107037 / JCM 12360 / KCTC 9906 / NCIMB 13794 / A6) (Arthrobacter chlorophenolicus).